The primary structure comprises 343 residues: Methionine import ATP-binding protein MetN (343 aa).

Residues 2 to 241 enclose the ABC transporter domain; the sequence is IKLSNITKVF…PKTPLAQKFI (240 aa). 40–46 is a binding site for ATP; that stretch reads SGAGKST. The tract at residues 265-343 is C2 domain; sequence CVPMLRLEFT…HVKVEVLGYV (79 aa). L-methionine is bound by residues 278–283 and 295–296; these read VDAPLL and NI.

Belongs to the ABC transporter superfamily. Methionine importer (TC 3.A.1.24) family. As to quaternary structure, the complex is composed of two ATP-binding proteins (MetN), two transmembrane proteins (MetI) and a solute-binding protein (MetQ).

It is found in the cell inner membrane. The catalysed reaction is L-methionine(out) + ATP + H2O = L-methionine(in) + ADP + phosphate + H(+). It catalyses the reaction D-methionine(out) + ATP + H2O = D-methionine(in) + ADP + phosphate + H(+). With respect to regulation, ATPase activity is inhibited by intracellular L-methionine. Binding of methionine to the dimerized C-terminal regulatory domain stabilizes an inward-facing, ATPase-inactive conformation of the transporter, and as a consequence, the rate of ATP hydrolysis decreases. ADP is a competitive inhibitor. Its function is as follows. Part of the ABC transporter complex MetNIQ involved in methionine import. Responsible for energy coupling to the transport system. It has also been shown to be involved in formyl-L-methionine transport. This is Methionine import ATP-binding protein MetN from Escherichia coli (strain K12).